Consider the following 389-residue polypeptide: Phosphoglycerate kinase (389 aa).

Substrate-binding positions include 21–23, R36, 59–62, R112, and R145; these read DLN and HLGR. Residues K196, E313, and 342 to 345 contribute to the ATP site; that span reads GGDT.

Belongs to the phosphoglycerate kinase family. As to quaternary structure, monomer.

The protein localises to the cytoplasm. The catalysed reaction is (2R)-3-phosphoglycerate + ATP = (2R)-3-phospho-glyceroyl phosphate + ADP. The protein operates within carbohydrate degradation; glycolysis; pyruvate from D-glyceraldehyde 3-phosphate: step 2/5. This Histophilus somni (strain 2336) (Haemophilus somnus) protein is Phosphoglycerate kinase.